Consider the following 126-residue polypeptide: Aspartate 1-decarboxylase (126 aa).

The active-site Schiff-base intermediate with substrate; via pyruvic acid is the Ser25. Ser25 carries the pyruvic acid (Ser) modification. Thr57 contributes to the substrate binding site. Tyr58 serves as the catalytic Proton donor. Gly73 to Ala75 lines the substrate pocket.

This sequence belongs to the PanD family. In terms of assembly, heterooctamer of four alpha and four beta subunits. The cofactor is pyruvate. Post-translationally, is synthesized initially as an inactive proenzyme, which is activated by self-cleavage at a specific serine bond to produce a beta-subunit with a hydroxyl group at its C-terminus and an alpha-subunit with a pyruvoyl group at its N-terminus.

The protein localises to the cytoplasm. It catalyses the reaction L-aspartate + H(+) = beta-alanine + CO2. It participates in cofactor biosynthesis; (R)-pantothenate biosynthesis; beta-alanine from L-aspartate: step 1/1. Functionally, catalyzes the pyruvoyl-dependent decarboxylation of aspartate to produce beta-alanine. In Psychrobacter arcticus (strain DSM 17307 / VKM B-2377 / 273-4), this protein is Aspartate 1-decarboxylase.